A 353-amino-acid chain; its full sequence is Phosphoribosylformylglycinamidine cyclo-ligase (353 aa).

It belongs to the AIR synthase family.

It is found in the cytoplasm. It catalyses the reaction 2-formamido-N(1)-(5-O-phospho-beta-D-ribosyl)acetamidine + ATP = 5-amino-1-(5-phospho-beta-D-ribosyl)imidazole + ADP + phosphate + H(+). It functions in the pathway purine metabolism; IMP biosynthesis via de novo pathway; 5-amino-1-(5-phospho-D-ribosyl)imidazole from N(2)-formyl-N(1)-(5-phospho-D-ribosyl)glycinamide: step 2/2. The sequence is that of Phosphoribosylformylglycinamidine cyclo-ligase from Dinoroseobacter shibae (strain DSM 16493 / NCIMB 14021 / DFL 12).